Reading from the N-terminus, the 334-residue chain is DNA-directed RNA polymerase subunit alpha (334 aa).

The tract at residues 1–233 (MADQTISNVL…NLFTPLVSQE (233 aa)) is alpha N-terminal domain (alpha-NTD). An alpha C-terminal domain (alpha-CTD) region spans residues 263–334 (DNENSYNLYN…QLKKRFKIQL (72 aa)).

The protein belongs to the RNA polymerase alpha chain family. In plastids the minimal PEP RNA polymerase catalytic core is composed of four subunits: alpha, beta, beta', and beta''. When a (nuclear-encoded) sigma factor is associated with the core the holoenzyme is formed, which can initiate transcription.

It localises to the plastid. It is found in the chloroplast. It catalyses the reaction RNA(n) + a ribonucleoside 5'-triphosphate = RNA(n+1) + diphosphate. Functionally, DNA-dependent RNA polymerase catalyzes the transcription of DNA into RNA using the four ribonucleoside triphosphates as substrates. This is DNA-directed RNA polymerase subunit alpha from Chaetosphaeridium globosum (Charophycean green alga).